The chain runs to 288 residues: Beta-lactamase PSE-4 (288 aa).

The N-terminal stretch at M1–A17 is a signal peptide. The active-site Acyl-ester intermediate is the S65. C72 and C118 are oxidised to a cystine. R229–G231 contributes to the substrate binding site.

Belongs to the class-A beta-lactamase family.

It carries out the reaction a beta-lactam + H2O = a substituted beta-amino acid. Functionally, hydrolyzes both carbenicillin and oxacillin. In Pseudomonas aeruginosa, this protein is Beta-lactamase PSE-4 (pse4).